Here is a 176-residue protein sequence, read N- to C-terminus: Adenine phosphoribosyltransferase (176 aa).

The protein belongs to the purine/pyrimidine phosphoribosyltransferase family. In terms of assembly, homodimer.

It is found in the cytoplasm. It catalyses the reaction AMP + diphosphate = 5-phospho-alpha-D-ribose 1-diphosphate + adenine. The protein operates within purine metabolism; AMP biosynthesis via salvage pathway; AMP from adenine: step 1/1. Functionally, catalyzes a salvage reaction resulting in the formation of AMP, that is energically less costly than de novo synthesis. This Borreliella burgdorferi (strain ZS7) (Borrelia burgdorferi) protein is Adenine phosphoribosyltransferase.